Here is a 571-residue protein sequence, read N- to C-terminus: Proline--tRNA ligase (571 aa).

The protein belongs to the class-II aminoacyl-tRNA synthetase family. ProS type 1 subfamily. In terms of assembly, homodimer.

The protein localises to the cytoplasm. It catalyses the reaction tRNA(Pro) + L-proline + ATP = L-prolyl-tRNA(Pro) + AMP + diphosphate. Catalyzes the attachment of proline to tRNA(Pro) in a two-step reaction: proline is first activated by ATP to form Pro-AMP and then transferred to the acceptor end of tRNA(Pro). As ProRS can inadvertently accommodate and process non-cognate amino acids such as alanine and cysteine, to avoid such errors it has two additional distinct editing activities against alanine. One activity is designated as 'pretransfer' editing and involves the tRNA(Pro)-independent hydrolysis of activated Ala-AMP. The other activity is designated 'posttransfer' editing and involves deacylation of mischarged Ala-tRNA(Pro). The misacylated Cys-tRNA(Pro) is not edited by ProRS. In Ectopseudomonas mendocina (strain ymp) (Pseudomonas mendocina), this protein is Proline--tRNA ligase.